Here is a 268-residue protein sequence, read N- to C-terminus: Undecaprenyl-diphosphatase (268 aa).

The next 7 helical transmembrane spans lie at 47 to 67, 83 to 103, 109 to 129, 144 to 164, 184 to 204, 218 to 238, and 246 to 266; these read FAIL…FFKL, FIIG…IAGK, LFDP…LLWV, YPLL…IPGV, AAEF…VYDF, LVAI…KAFL, and FVLF…ALAL.

Belongs to the UppP family.

Its subcellular location is the cell inner membrane. The catalysed reaction is di-trans,octa-cis-undecaprenyl diphosphate + H2O = di-trans,octa-cis-undecaprenyl phosphate + phosphate + H(+). In terms of biological role, catalyzes the dephosphorylation of undecaprenyl diphosphate (UPP). Confers resistance to bacitracin. The chain is Undecaprenyl-diphosphatase from Bradyrhizobium sp. (strain BTAi1 / ATCC BAA-1182).